The following is a 202-amino-acid chain: Superoxide dismutase [Mn] (202 aa).

Mn(2+)-binding residues include His27, His82, Asp164, and His168.

This sequence belongs to the iron/manganese superoxide dismutase family. In terms of assembly, homodimer. Mn(2+) is required as a cofactor.

It carries out the reaction 2 superoxide + 2 H(+) = H2O2 + O2. Functionally, destroys superoxide anion radicals which are normally produced within the cells and which are toxic to biological systems. In Listeria monocytogenes serovar 1/2a (strain ATCC BAA-679 / EGD-e), this protein is Superoxide dismutase [Mn] (sodA).